Reading from the N-terminus, the 391-residue chain is Putative F-box protein At1g47730 (391 aa).

Basic and acidic residues predominate over residues 1–12; that stretch reads MEQREEKTENIQ. The interval 1 to 25 is disordered; the sequence is MEQREEKTENIQRKRSRGKSSSSSL. Residues 19 to 68 form the F-box domain; that stretch reads KSSSSSLPLDLTSEIFSRLPAKSVVRFRCVSKLWSSITTAPYFTNSFETR.

In Arabidopsis thaliana (Mouse-ear cress), this protein is Putative F-box protein At1g47730.